The primary structure comprises 1062 residues: Carbamoyl phosphate synthase large chain (1062 aa).

The tract at residues 1-401 is carboxyphosphate synthetic domain; the sequence is MPKRKDIHKI…AMQKAVRSLE (401 aa). The ATP site is built by R129, R169, G175, G176, K208, I210, E215, G241, I242, H243, Q284, and E298. In terms of domain architecture, ATP-grasp 1 spans 133–327; that stretch reads KNLCKELGEP…IAKMAAKIAV (195 aa). 3 residues coordinate Mg(2+): Q284, E298, and N300. Positions 284, 298, and 300 each coordinate Mn(2+). The tract at residues 402–546 is oligomerization domain; it reads IDEKDLYSEE…YSTYDAENES (145 aa). The tract at residues 547–929 is carbamoyl phosphate synthetic domain; the sequence is HRSGKKSVIV…ALYKAFAGAK (383 aa). An ATP-grasp 2 domain is found at 671–861; the sequence is DDIIKELKLN…MAQVATRVIM (191 aa). Positions 707, 746, 748, 752, 777, 778, 779, 780, 820, and 832 each coordinate ATP. Mg(2+) contacts are provided by Q820, E832, and N834. 3 residues coordinate Mn(2+): Q820, E832, and N834. The MGS-like domain maps to 930–1062; it reads MQLPENGNVL…NRSFATDALQ (133 aa). Residues 930–1062 are allosteric domain; it reads MQLPENGNVL…NRSFATDALQ (133 aa).

It belongs to the CarB family. Composed of two chains; the small (or glutamine) chain promotes the hydrolysis of glutamine to ammonia, which is used by the large (or ammonia) chain to synthesize carbamoyl phosphate. Tetramer of heterodimers (alpha,beta)4. The cofactor is Mg(2+). Requires Mn(2+) as cofactor.

It carries out the reaction hydrogencarbonate + L-glutamine + 2 ATP + H2O = carbamoyl phosphate + L-glutamate + 2 ADP + phosphate + 2 H(+). The catalysed reaction is hydrogencarbonate + NH4(+) + 2 ATP = carbamoyl phosphate + 2 ADP + phosphate + 2 H(+). It functions in the pathway amino-acid biosynthesis; L-arginine biosynthesis; carbamoyl phosphate from bicarbonate: step 1/1. It participates in pyrimidine metabolism; UMP biosynthesis via de novo pathway; (S)-dihydroorotate from bicarbonate: step 1/3. Large subunit of the glutamine-dependent carbamoyl phosphate synthetase (CPSase). CPSase catalyzes the formation of carbamoyl phosphate from the ammonia moiety of glutamine, carbonate, and phosphate donated by ATP, constituting the first step of 2 biosynthetic pathways, one leading to arginine and/or urea and the other to pyrimidine nucleotides. The large subunit (synthetase) binds the substrates ammonia (free or transferred from glutamine from the small subunit), hydrogencarbonate and ATP and carries out an ATP-coupled ligase reaction, activating hydrogencarbonate by forming carboxy phosphate which reacts with ammonia to form carbamoyl phosphate. This Lactobacillus acidophilus (strain ATCC 700396 / NCK56 / N2 / NCFM) protein is Carbamoyl phosphate synthase large chain.